The following is a 144-amino-acid chain: Monobin (144 aa).

The first 16 residues, 1 to 16, serve as a signal peptide directing secretion; sequence MRLLALFAFAVAVVSA. Position 17 is a pyrrolidone carboxylic acid (Gln17). A BPTI/Kunitz inhibitor 1 domain is found at 18–73; the sequence is RNQMCQQPRTQGSCDASNQITKFFYTGSGCTSAPVCSDTDGGYGTEDECIQACTVQ. Intrachain disulfides connect Cys22/Cys70, Cys31/Cys53, and Cys47/Cys66. The tract at residues 74 to 85 is linker; sequence GGHHNEGAGEEG. The BPTI/Kunitz inhibitor domain occupies 86–139; sequence CSGDPPRGDCGGQVEERYYFDSTTRTCQTFEYRGCSSGNPDNSYETEIECEIAC. 3 disulfides stabilise this stretch: Cys86–Cys139, Cys95–Cys120, and Cys112–Cys135. The Cell attachment site signature appears at 92 to 94; it reads RGD.

The N-terminus is blocked. In terms of tissue distribution, expressed in salivary glands.

The protein resides in the cytoplasmic vesicle. It is found in the secretory vesicle. The protein localises to the secreted. Its function is as follows. Tick salivary thrombin inhibitor that plays an important part in the anti-hemostatic strategy of ticks. This Argas monolakensis (Mono lake bird tick) protein is Monobin.